Reading from the N-terminus, the 349-residue chain is Cell adhesion molecule CEACAM8 (349 aa).

The first 34 residues, 1-34, serve as a signal peptide directing secretion; sequence MGPISAPSCRWRIPWQGLLLTASLFTFWNPPTTA. The Ig-like V-type domain occupies 35-142; that stretch reads QLTIEAVPSN…EVTGQFSVHP (108 aa). N-linked (GlcNAc...) asparagine glycosylation is found at Asn-104, Asn-111, Asn-115, Asn-152, Asn-173, Asn-197, Asn-224, Asn-256, Asn-274, Asn-288, and Asn-309. Ig-like C2-type domains follow at residues 145-232 and 237-319; these read PKPS…VTLN and PDAP…ITVS. A disulfide bridge links Cys-167 with Cys-215. A disulfide bridge links Cys-259 with Cys-299. The GPI-anchor amidated aspartate moiety is linked to residue Asp-320. The propeptide at 321 to 349 is removed in mature form; sequence ALVQGSSPGLSARATVSIMIGVLARVALI.

Belongs to the immunoglobulin superfamily. CEA family. As to quaternary structure, monomer. Heterodimer with CEACAM6; heterodimerizes via its Ig-like V-type domain. In terms of processing, glycosylated. As to expression, expressed in leukocytes of chronic myeloid Leukemia patients and bone marrow.

The protein localises to the cell membrane. The protein resides in the cell surface. Functionally, cell surface glycoprotein that plays a role in cell adhesion in a calcium-independent manner. Mediates heterophilic cell adhesion with other carcinoembryonic antigen-related cell adhesion molecules, such as CEACAM6. Heterophilic interaction with CEACAM8 occurs in activated neutrophils. The protein is Cell adhesion molecule CEACAM8 of Homo sapiens (Human).